The following is a 502-amino-acid chain: Glycerol kinase (502 aa).

An ADP-binding site is contributed by threonine 14. Residues threonine 14, threonine 15, and serine 16 each contribute to the ATP site. Threonine 14 provides a ligand contact to sn-glycerol 3-phosphate. Arginine 18 serves as a coordination point for ADP. Sn-glycerol 3-phosphate contacts are provided by arginine 84, glutamate 85, tyrosine 136, and aspartate 246. The glycerol site is built by arginine 84, glutamate 85, tyrosine 136, aspartate 246, and glutamine 247. Residues threonine 268 and glycine 311 each coordinate ADP. Residues threonine 268, glycine 311, glutamine 315, and glycine 412 each contribute to the ATP site. ADP contacts are provided by glycine 412 and asparagine 416.

It belongs to the FGGY kinase family. As to quaternary structure, homotetramer and homodimer (in equilibrium). Heterodimer with EIIA-Glc. Binds 1 zinc ion per glycerol kinase EIIA-Glc dimer. The zinc ion is important for dimerization.

The catalysed reaction is glycerol + ATP = sn-glycerol 3-phosphate + ADP + H(+). The protein operates within polyol metabolism; glycerol degradation via glycerol kinase pathway; sn-glycerol 3-phosphate from glycerol: step 1/1. Activity of this regulatory enzyme is affected by several metabolites. Allosterically and non-competitively inhibited by fructose 1,6-bisphosphate (FBP) and unphosphorylated phosphocarrier protein EIIA-Glc (III-Glc), an integral component of the bacterial phosphotransferase (PTS) system. Functionally, key enzyme in the regulation of glycerol uptake and metabolism. Catalyzes the phosphorylation of glycerol to yield sn-glycerol 3-phosphate. In Escherichia coli O7:K1 (strain IAI39 / ExPEC), this protein is Glycerol kinase.